A 210-amino-acid chain; its full sequence is Eukaryotic translation initiation factor 2 subunit gamma (210 aa).

Residues 1-196 (IGHVAHGKST…HLVETITPPR (196 aa)) enclose the tr-type G domain. Positions 2-9 (GHVAHGKS) are G1. 5 to 10 (AHGKST) is a binding site for GTP. The segment at 30 to 34 (NITIK) is G2. Residues 85–88 (DCPG) form a G3 region. GTP-binding positions include 141–144 (NKID) and 174–176 (SAI). Residues 141 to 144 (NKID) form a G4 region. Positions 174 to 176 (SAI) are G5.

The protein belongs to the TRAFAC class translation factor GTPase superfamily. Classic translation factor GTPase family. EIF2G subfamily. In terms of assembly, eukaryotic translation initiation factor 2 eIF2 is a heterotrimeric complex composed of an alpha, a beta and a gamma subunit. The factors eIF-1, eIF-2, eIF-3, TIF5/eIF-5 and methionyl-tRNAi form a multifactor complex (MFC) that may bind to the 40S ribosome.

The protein localises to the cytoplasm. It is found in the cytosol. The enzyme catalyses GTP + H2O = GDP + phosphate + H(+). Functionally, as a subunit of eukaryotic initiation factor 2 eIF2, involved in the early steps of protein synthesis. In the presence of GTP, eIF-2 forms a ternary complex with initiator tRNA Met-tRNAi and then recruits the 40S ribosomal complex and initiation factors eIF-1, eIF-1A and eIF-3 to form the 43S pre-initiation complex (43S PIC), a step that determines the rate of protein translation. The 43S PIC binds to mRNA and scans downstream to the initiation codon, where it forms a 48S initiation complex by codon-anticodon base pairing. This leads to the displacement of eIF-1 to allow GTPase-activating protein (GAP) eIF-5-mediated hydrolysis of eIF2-bound GTP. Hydrolysis of GTP and release of Pi, which makes GTP hydrolysis irreversible, causes the release of the eIF-2-GDP binary complex from the 40S subunit, an event that is essential for the subsequent joining of the 60S ribosomal subunit to form an elongation-competent 80S ribosome. In order for eIF-2 to recycle and catalyze another round of initiation, the GDP bound to eIF-2 must be exchanged with GTP by way of a reaction catalyzed by GDP-GTP exchange factor (GEF) eIF-2B. This is Eukaryotic translation initiation factor 2 subunit gamma from Spironucleus vortens.